The following is a 192-amino-acid chain: Pyridoxal 5'-phosphate synthase subunit PdxT (192 aa).

46-48 (GES) is a binding site for L-glutamine. Cys77 serves as the catalytic Nucleophile. Residues Arg103 and 131 to 132 (IR) contribute to the L-glutamine site. Catalysis depends on charge relay system residues His167 and Glu169.

It belongs to the glutaminase PdxT/SNO family. As to quaternary structure, in the presence of PdxS, forms a dodecamer of heterodimers. Only shows activity in the heterodimer.

It catalyses the reaction aldehydo-D-ribose 5-phosphate + D-glyceraldehyde 3-phosphate + L-glutamine = pyridoxal 5'-phosphate + L-glutamate + phosphate + 3 H2O + H(+). The enzyme catalyses L-glutamine + H2O = L-glutamate + NH4(+). The protein operates within cofactor biosynthesis; pyridoxal 5'-phosphate biosynthesis. Catalyzes the hydrolysis of glutamine to glutamate and ammonia as part of the biosynthesis of pyridoxal 5'-phosphate. The resulting ammonia molecule is channeled to the active site of PdxS. This is Pyridoxal 5'-phosphate synthase subunit PdxT from Exiguobacterium sibiricum (strain DSM 17290 / CCUG 55495 / CIP 109462 / JCM 13490 / 255-15).